The sequence spans 235 residues: MSRYLKHFTAVGDNKSAVPTWHEEDTSHHVTTLHDAPDGLEVSTGQHLGQLSFRDSLRKLYSTERFQIVVVCLVVLDAIFVLCELLIDLSIIEADHHRIAPQVFHYLSLALLTFFMVELAGKIFAYRLEFLHHKFEVFDGIVVVVSFILDIIYISKEDAFDAMGLLILLRLWRVARIINGILVSVQNRANHRVEKLKEINESLVHQVNELKEQNTKMDQENVRLRALLKDHSIDF.

Residues 1–65 are Cytoplasmic-facing; the sequence is MSRYLKHFTA…SLRKLYSTER (65 aa). Residues 66 to 86 form a helical membrane-spanning segment; that stretch reads FQIVVVCLVVLDAIFVLCELL. Residues 87 to 103 are Extracellular-facing; the sequence is IDLSIIEADHHRIAPQV. Residues 104–126 traverse the membrane as a helical segment; it reads FHYLSLALLTFFMVELAGKIFAY. Residues 127–134 are Cytoplasmic-facing; that stretch reads RLEFLHHK. Residues 135-155 traverse the membrane as a helical segment; the sequence is FEVFDGIVVVVSFILDIIYIS. The Extracellular portion of the chain corresponds to 156 to 162; that stretch reads KEDAFDA. A helical membrane pass occupies residues 163–183; sequence MGLLILLRLWRVARIINGILV. Residues 184-235 lie on the Cytoplasmic side of the membrane; that stretch reads SVQNRANHRVEKLKEINESLVHQVNELKEQNTKMDQENVRLRALLKDHSIDF. Positions 187-231 form a coiled coil; sequence NRANHRVEKLKEINESLVHQVNELKEQNTKMDQENVRLRALLKDH.

This sequence belongs to the hydrogen channel family. In terms of assembly, homodimer.

Its subcellular location is the membrane. It localises to the cell membrane. Functionally, mediates the voltage-dependent proton permeability of excitable membranes. Forms a proton-selective channel through which protons may pass in accordance with their electrochemical gradient. This Danio rerio (Zebrafish) protein is Voltage-gated hydrogen channel 1 (hvcn1).